A 151-amino-acid polypeptide reads, in one-letter code: Small ribosomal subunit protein uS15y (151 aa).

It belongs to the universal ribosomal protein uS15 family.

This is Small ribosomal subunit protein uS15y (RPS13B) from Arabidopsis thaliana (Mouse-ear cress).